Reading from the N-terminus, the 564-residue chain is Proline--tRNA ligase (564 aa).

This sequence belongs to the class-II aminoacyl-tRNA synthetase family. ProS type 1 subfamily. As to quaternary structure, homodimer.

The protein resides in the cytoplasm. It carries out the reaction tRNA(Pro) + L-proline + ATP = L-prolyl-tRNA(Pro) + AMP + diphosphate. Catalyzes the attachment of proline to tRNA(Pro) in a two-step reaction: proline is first activated by ATP to form Pro-AMP and then transferred to the acceptor end of tRNA(Pro). As ProRS can inadvertently accommodate and process non-cognate amino acids such as alanine and cysteine, to avoid such errors it has two additional distinct editing activities against alanine. One activity is designated as 'pretransfer' editing and involves the tRNA(Pro)-independent hydrolysis of activated Ala-AMP. The other activity is designated 'posttransfer' editing and involves deacylation of mischarged Ala-tRNA(Pro). The misacylated Cys-tRNA(Pro) is not edited by ProRS. In Bacillus subtilis (strain 168), this protein is Proline--tRNA ligase.